A 340-amino-acid polypeptide reads, in one-letter code: KH domain-containing RNA-binding protein QKI (340 aa).

Residues tyrosine 87–valine 153 enclose the KH domain. Residues proline 275 to proline 278 carry the SH3-binding motif. The Nuclear localization signal motif lies at arginine 323–arginine 329.

Belongs to the quaking family. As to quaternary structure, homodimer; does not require RNA to homodimerize.

It is found in the cytoplasm. It localises to the nucleus. Its function is as follows. RNA reader protein, which recognizes and binds specific RNAs, thereby regulating RNA metabolic processes, such as pre-mRNA splicing, circular RNA (circRNA) formation, mRNA export, mRNA stability and/or translation. Involved in various cellular processes, such as mRNA storage into stress granules, apoptosis, interferon response, glial cell fate and development. Binds to the 5'-NACUAAY-N(1,20)-UAAY-3' RNA core sequence. Acts as a mRNA modification reader that specifically recognizes and binds mRNA transcripts modified by internal N(7)-methylguanine (m7G). Promotes the formation of circular RNAs (circRNAs): acts by binding to sites flanking circRNA-forming exons. CircRNAs are produced by back-splicing circularization of pre-mRNAs. Required to protect and promote stability of mRNAs which promotes oligodendrocyte differentiation. Acts as an important regulator of muscle development. In Gallus gallus (Chicken), this protein is KH domain-containing RNA-binding protein QKI.